A 289-amino-acid polypeptide reads, in one-letter code: Methionyl-tRNA formyltransferase (289 aa).

Serine 106 to proline 109 serves as a coordination point for (6S)-5,6,7,8-tetrahydrofolate.

Belongs to the Fmt family.

The catalysed reaction is L-methionyl-tRNA(fMet) + (6R)-10-formyltetrahydrofolate = N-formyl-L-methionyl-tRNA(fMet) + (6S)-5,6,7,8-tetrahydrofolate + H(+). In terms of biological role, attaches a formyl group to the free amino group of methionyl-tRNA(fMet). The formyl group appears to play a dual role in the initiator identity of N-formylmethionyl-tRNA by promoting its recognition by IF2 and preventing the misappropriation of this tRNA by the elongation apparatus. The sequence is that of Methionyl-tRNA formyltransferase from Mycoplasmopsis pulmonis (strain UAB CTIP) (Mycoplasma pulmonis).